Reading from the N-terminus, the 376-residue chain is Coatomer subunit delta-4 (376 aa).

The segment at 65–92 is disordered; sequence LNTDTDTFTSRPKGRTSGGTTGAGKGIG. The span at 80–92 shows a compositional bias: gly residues; it reads TSGGTTGAGKGIG. Residues 134 to 376 form the MHD domain; sequence SDPVTVAVEE…RLVADNYQVV (243 aa).

The protein belongs to the adaptor complexes medium subunit family. Delta-COP subfamily. In terms of assembly, oligomeric complex that consists of at least the alpha, beta, beta', gamma, delta, epsilon and zeta subunits.

The protein localises to the cytoplasm. Its subcellular location is the golgi apparatus membrane. The protein resides in the cytoplasmic vesicle. It is found in the COPI-coated vesicle membrane. Its function is as follows. The coatomer is a cytosolic protein complex that binds to dilysine motifs and reversibly associates with Golgi non-clathrin-coated vesicles, which further mediate biosynthetic protein transport from the ER, via the Golgi up to the trans Golgi network. Coatomer complex is required for budding from Golgi membranes, and is essential for the retrograde Golgi-to-ER transport of dilysine-tagged proteins. This Oryza sativa subsp. japonica (Rice) protein is Coatomer subunit delta-4.